Reading from the N-terminus, the 63-residue chain is MNFSRIIFLVFACFVALASVSAAPEPRWKIFKKIERVGQNVRDGIIKAGPAIQVLGTAKALGK.

Positions 1-22 (MNFSRIIFLVFACFVALASVSA) are cleaved as a signal peptide. Residues 23–26 (APEP) constitute a propeptide, removed by a dipeptidylpeptidase. Position 61 is a leucine amide (L61).

This sequence belongs to the cecropin family.

It localises to the secreted. Functionally, has antibacterial activity. This Hyphantria cunea (Fall webworm moth) protein is Hyphancin-3D.